We begin with the raw amino-acid sequence, 361 residues long: Protein RecA (361 aa).

G77–T84 contacts ATP.

The protein belongs to the RecA family.

The protein resides in the cytoplasm. Functionally, can catalyze the hydrolysis of ATP in the presence of single-stranded DNA, the ATP-dependent uptake of single-stranded DNA by duplex DNA, and the ATP-dependent hybridization of homologous single-stranded DNAs. It interacts with LexA causing its activation and leading to its autocatalytic cleavage. The polypeptide is Protein RecA (Sinorhizobium medicae (strain WSM419) (Ensifer medicae)).